The chain runs to 171 residues: Ponticulin-like protein F (171 aa).

The signal sequence occupies residues 1 to 20 (MKFIPALIIFVFTIFALTNS). Glycine 149 carries the GPI-like-anchor amidated glycine lipid modification. A propeptide spans 150-171 (TSSTIVIPFALILSLLLSVITL) (removed in mature form).

The protein belongs to the ponticulin family. In terms of processing, the GPI-like-anchor contains a phosphoceramide group, rather than a phosphatidyl group.

The protein resides in the cell membrane. The sequence is that of Ponticulin-like protein F (ponF) from Dictyostelium discoideum (Social amoeba).